The sequence spans 301 residues: Recombination-associated protein RdgC (301 aa).

It belongs to the RdgC family.

The protein resides in the cytoplasm. It is found in the nucleoid. In terms of biological role, may be involved in recombination. The protein is Recombination-associated protein RdgC of Xanthomonas oryzae pv. oryzae (strain KACC10331 / KXO85).